Reading from the N-terminus, the 449-residue chain is POU domain, class 5, transcription factor 1.1 (449 aa).

2 disordered regions span residues 79-125 (ENNQ…SPPN) and 170-233 (YPTP…PSES). Residues 97-110 (SRIKVKEEVVHETD) are compositionally biased toward basic and acidic residues. Polar residues predominate over residues 170–180 (YPTPANQSPNT). Low complexity predominate over residues 187 to 199 (SSMESSRCSSTNS). The span at 224 to 233 (DNEEEVPSES) shows a compositional bias: acidic residues. The POU-specific domain occupies 227 to 301 (EEVPSESEME…FLERWVVEAE (75 aa)). Positions 321–380 (KRKRRTNIENIVKGTLESYFMKCPKPGAQEMVQIAKELNMDKDVVRVWFCNRRQKGKRQG) form a DNA-binding region, homeobox.

This sequence belongs to the POU transcription factor family. Class-5 subfamily. In terms of assembly, interacts with components of the transcription complex that assembles on the vent2-B gene, including vent2 (via C-terminus), smad1 and smad4. Forms a repression complex on the promoters of the gsc and mix2 genes via interactions with the nodal/activin signaling pathway transducers foxh1/fast1, gtf2ird1/wbscr11 and smad2. Forms a repression complex on the promoters of the nodal/nr1 and siamois genes with the maternal factors tcf7l1/tcf3 and vegt. Highly enriched within the animal half of developing embryos within ectodermal and mesodermal regions. Expressed in the neuroectoderm at the early neurula stage, with expression initially extending to the future hindbrain/midbrain boundary, but later shifting toward the posterior pole where it persists within the tip of the tail in hatching embryos. Expressed at very low levels in the adult kidney.

The protein localises to the nucleus. Its function is as follows. Transcription factor that binds to the octamer motif (5'-ATTTGCAT-3'). Activates transcription when directly bound to the octamer DNA sequence, but can form repression complexes with other proteins at the promoter site to inhibit transcription. Binds to the promoter of the vent2-B gene to activate transcription when in the presence of other BMP signaling factors also bound to the promoter. Inhibits the competence of ectodermal cells to respond to BMP during embryogenesis thereby inhibiting epidermal differentiation and promoting neural induction. Antagonizes the activity of nodal/activin signaling by forming a transcriptional repression complex on the gsc and mix2 gene promoters to inhibit their transcription, and thus maintain the undifferentiated state of embryonic cells to prevent them from differentiating prematurely. Acts maternally to inhibit vegt and beta-catenin-activated gene transcription by forming a transcriptional repression complex on the nodal/nr1 and siamois promoters to inhibit their transcription. The sequence is that of POU domain, class 5, transcription factor 1.1 (pou5f1.1) from Xenopus laevis (African clawed frog).